A 600-amino-acid chain; its full sequence is ATP-dependent lipid A-core flippase (600 aa).

5 helical membrane passes run 28-48 (IMAV…IAFI), 80-100 (IMLM…VANF), 182-202 (WKLS…ISVV), 267-287 (ISQP…LYAA), and 295-315 (DLTA…LQPI). Residues 28 to 327 (IMAVLGLITY…LTRVNAEFQR (300 aa)) form the ABC transmembrane type-1 domain. The region spanning 359–596 (LAFDNVTFAY…AGIYANLYQM (238 aa)) is the ABC transporter domain. 393–400 (GRSGSGKS) provides a ligand contact to ATP.

This sequence belongs to the ABC transporter superfamily. Lipid exporter (TC 3.A.1.106) family. Homodimer.

Its subcellular location is the cell inner membrane. The catalysed reaction is ATP + H2O + lipid A-core oligosaccharideSide 1 = ADP + phosphate + lipid A-core oligosaccharideSide 2.. In terms of biological role, involved in lipopolysaccharide (LPS) biosynthesis. Translocates lipid A-core from the inner to the outer leaflet of the inner membrane. Transmembrane domains (TMD) form a pore in the inner membrane and the ATP-binding domain (NBD) is responsible for energy generation. The chain is ATP-dependent lipid A-core flippase from Shewanella frigidimarina (strain NCIMB 400).